Here is a 119-residue protein sequence, read N- to C-terminus: MCSCGKNRAGEGAPKRYSRNFTDPWRKTPGRVIGTSFVRFYQVTLSSLIGNSCRHLPTCSEYAYEAIARHGLWSGGWMGLFRVVRCGPFGTHGFDPVPRALSSDLKWYLPWRYWRCSAS.

Belongs to the UPF0161 family.

The protein resides in the cell inner membrane. Its function is as follows. Could be involved in insertion of integral membrane proteins into the membrane. The chain is Putative membrane protein insertion efficiency factor from Brucella anthropi (strain ATCC 49188 / DSM 6882 / CCUG 24695 / JCM 21032 / LMG 3331 / NBRC 15819 / NCTC 12168 / Alc 37) (Ochrobactrum anthropi).